We begin with the raw amino-acid sequence, 641 residues long: MEMKWFLSKIQDDFRGGKINLEKTQRLLEKLDIRCSYIHVKRIFKDNDRLKQGRITIEEFRAIYRILTHREEIVEIFNAYSENRKILLENNLVQFLTQEQYTTEMSKTIAFEIIQKYEPIEEVRKARQMSLEGFTRYMDSRECQLFKNECRKVYQDMTHPLNDYFISSSHNTYLVSDQLVGPSDLWGYVSALVKGCRCLEIDCWDGAQNEPVVYHGYTLTSKLLFKTVIQAIHKYAFMTSDYPVVLSLENHCSPAQQEIMADNLQTTFGESLLSDMLADFPDTLPSPEALKFKVLVKNKKIGTLKETHERKGSDKRGKVEEWEEEVADLEEEEEEEEKFKESEIFESVLGENQDKETGVKKLSGVTLFKKKKTRKLKIALALSDLVIYTKAEKFKSFQHSRLYQQFNENNSIGETQARKLSKLRAHEFIFHTRKFITRIYPKATRADSSNFNPQEFWNIGCQMVALNFQTPGLPMDLQNGKFLDNGGSGYILKPHFLRESESYFNPSDIKDSMPITLTIRLISGIQLPLTHSSSNKGDTLVIIEVFGVPNDQMKQQTRVIKKNAFSPRWNETFTFIIHVPELALIRFVVESQGLIAGNEFLGQYTLPLLCMNKGYRRVPLFSRMGESLEPASLFVYVWYVR.

Residues 35–70 enclose the EF-hand domain; the sequence is CSYIHVKRIFKDNDRLKQGRITIEEFRAIYRILTHR. A PI-PLC X-box domain is found at 155-299; that stretch reads QDMTHPLNDY…LKFKVLVKNK (145 aa). Residues His-170 and His-215 contribute to the active site. One can recognise a PI-PLC Y-box domain in the interval 382-498; it reads LSDLVIYTKA…GYILKPHFLR (117 aa). The C2 domain maps to 498–622; it reads RESESYFNPS…KGYRRVPLFS (125 aa).

Interacts via its C2 domain with PtdIns(3)P and, to a lesser extent, PtdIns(5)P in vitro. It depends on Ca(2+) as a cofactor.

It is found in the nucleus. The protein resides in the cytoplasm. The protein localises to the perinuclear region. The enzyme catalyses a 1,2-diacyl-sn-glycero-3-phospho-(1D-myo-inositol-4,5-bisphosphate) + H2O = 1D-myo-inositol 1,4,5-trisphosphate + a 1,2-diacyl-sn-glycerol + H(+). Its function is as follows. The production of the second messenger molecules diacylglycerol (DAG) and inositol 1,4,5-trisphosphate (IP3) is mediated by activated phosphatidylinositol-specific phospholipase C enzymes. In vitro, hydrolyzes PtdIns(4,5)P2 in a Ca(2+)-dependent manner. Triggers intracellular Ca(2+) oscillations in oocytes solely during M phase and is involved in inducing oocyte activation and initiating embryonic development up to the blastocyst stage. Is therefore a strong candidate for the egg-activating soluble sperm factor that is transferred from the sperm into the egg cytoplasm following gamete membrane fusion. May exert an inhibitory effect on phospholipase-C-coupled processes that depend on calcium ions and protein kinase C, including CFTR trafficking and function. In Macaca fascicularis (Crab-eating macaque), this protein is 1-phosphatidylinositol 4,5-bisphosphate phosphodiesterase zeta-1.